We begin with the raw amino-acid sequence, 737 residues long: Photosystem I P700 chlorophyll a apoprotein A2 (737 aa).

8 helical membrane-spanning segments follow: residues 46-69 (LFST…FHIA), 135-158 (LYQG…LHLQ), 175-199 (LNHH…HVAI), 273-291 (IAHH…GHMY), 333-356 (LHFQ…QHMY), 372-398 (AALY…IFFI), 420-442 (AIIS…LYVH), and 520-538 (FLVH…LILV). Residues cysteine 562 and cysteine 571 each coordinate [4Fe-4S] cluster. The next 2 helical transmembrane spans lie at 578 to 599 (AFYL…YWHW) and 646 to 668 (LAVW…MFLI). 3 residues coordinate chlorophyll a: histidine 657, methionine 665, and tyrosine 673. Phylloquinone is bound at residue tryptophan 674. The chain crosses the membrane as a helical span at residues 710–730 (VVGLAHFTVGYVLTYAAFLIA).

The protein belongs to the PsaA/PsaB family. The PsaA/B heterodimer binds the P700 chlorophyll special pair and subsequent electron acceptors. PSI consists of a core antenna complex that captures photons, and an electron transfer chain that converts photonic excitation into a charge separation. The cyanobacterial PSI reaction center is composed of one copy each of PsaA,B,C,D,E,F,I,J,K,L,M and X, and forms trimeric complexes. The cofactor is PSI electron transfer chain: 5 chlorophyll a, 1 chlorophyll a', 2 phylloquinones and 3 4Fe-4S clusters. PSI core antenna: 90 chlorophyll a, 22 carotenoids, 3 phospholipids and 1 galactolipid. P700 is a chlorophyll a/chlorophyll a' dimer, A0 is one or more chlorophyll a, A1 is one or both phylloquinones and FX is a shared 4Fe-4S iron-sulfur center..

Its subcellular location is the cellular thylakoid membrane. It carries out the reaction reduced [plastocyanin] + hnu + oxidized [2Fe-2S]-[ferredoxin] = oxidized [plastocyanin] + reduced [2Fe-2S]-[ferredoxin]. In terms of biological role, psaA and PsaB bind P700, the primary electron donor of photosystem I (PSI), as well as the electron acceptors A0, A1 and FX. PSI is a plastocyanin/cytochrome c6-ferredoxin oxidoreductase, converting photonic excitation into a charge separation, which transfers an electron from the donor P700 chlorophyll pair to the spectroscopically characterized acceptors A0, A1, FX, FA and FB in turn. Oxidized P700 is reduced on the lumenal side of the thylakoid membrane by plastocyanin or cytochrome c6. The sequence is that of Photosystem I P700 chlorophyll a apoprotein A2 from Synechococcus sp. (strain CC9605).